A 247-amino-acid polypeptide reads, in one-letter code: Protein NipSnap homolog 3A (247 aa).

An N6-acetyllysine mark is found at K48 and K166.

The protein belongs to the NipSnap family.

It is found in the cytoplasm. The protein localises to the cytosol. The protein is Protein NipSnap homolog 3A (NIPSNAP3A) of Pongo abelii (Sumatran orangutan).